Here is a 117-residue protein sequence, read N- to C-terminus: MRKSNPNLVTLIDVLLSESAKNEAPVWKEVAERLAKPRRLQAEVNVSKIEKYAKPNEYVVVPGKVLGSGSITKPVKVAALSFSEKAASKIREAGGVCMKIEELLKENPKGSGVRLMV.

Belongs to the eukaryotic ribosomal protein eL18 family.

In Archaeoglobus fulgidus (strain ATCC 49558 / DSM 4304 / JCM 9628 / NBRC 100126 / VC-16), this protein is Large ribosomal subunit protein eL18.